Consider the following 79-residue polypeptide: Putative defensin-like protein 137 (79 aa).

The signal sequence occupies residues 1-24 (MKKYFQPSFVILIIFTVLVLGVVG). 4 disulfides stabilise this stretch: C33–C78, C42–C62, C47–C72, and C51–C74.

This sequence belongs to the DEFL family.

It is found in the secreted. In Arabidopsis thaliana (Mouse-ear cress), this protein is Putative defensin-like protein 137 (LCR14).